We begin with the raw amino-acid sequence, 241 residues long: B-cell receptor-associated protein 29 (241 aa).

Topologically, residues M1–A6 are lumenal. The helical transmembrane segment at A7–I27 threads the bilayer. Topologically, residues P28–K43 are cytoplasmic. A helical membrane pass occupies residues I44–L64. At D65 to N103 the chain is on the lumenal side. The chain crosses the membrane as a helical span at residues L104 to I124. Topologically, residues T125–L241 are cytoplasmic. Residues G166 to L233 are a coiled coil. The disordered stretch occupies residues K193–L223. A compositionally biased stretch (basic and acidic residues) spans M206–L223. The Di-lysine motif motif lies at K238–L241.

Belongs to the BCAP29/BCAP31 family. As to quaternary structure, homodimer and heterodimer with BCAP31. Binds CASP8 as a complex containing BCAP31, BCAP29, BCL2 and/or BCL2L1. Interacts with VAMP3, VAMP1 and membrane IgD immunoglobulins. May interact with ACTG1 and non-muscle myosin II.

The protein resides in the endoplasmic reticulum membrane. May play a role in anterograde transport of membrane proteins from the endoplasmic reticulum to the Golgi. May be involved in CASP8-mediated apoptosis. The polypeptide is B-cell receptor-associated protein 29 (BCAP29) (Pongo abelii (Sumatran orangutan)).